We begin with the raw amino-acid sequence, 160 residues long: Succinate dehydrogenase assembly factor 2-B, mitochondrial (160 aa).

Residues Met1–Ala23 constitute a mitochondrion transit peptide.

This sequence belongs to the SDHAF2 family. Interacts with the flavoprotein subunit within the SDH catalytic dimer.

It is found in the mitochondrion matrix. Its function is as follows. Plays an essential role in the assembly of succinate dehydrogenase (SDH), an enzyme complex (also referred to as respiratory complex II) that is a component of both the tricarboxylic acid (TCA) cycle and the mitochondrial electron transport chain, and which couples the oxidation of succinate to fumarate with the reduction of ubiquinone (coenzyme Q) to ubiquinol. Required for flavinylation (covalent attachment of FAD) of the flavoprotein subunit of the SDH catalytic dimer. The chain is Succinate dehydrogenase assembly factor 2-B, mitochondrial from Drosophila pseudoobscura pseudoobscura (Fruit fly).